Reading from the N-terminus, the 296-residue chain is MNLVSEKEFLDLPLVSVAEIVRCRGPKVSVFPFDGTRRWFHLECNPQYDDYQQAALRQSIRILKMLFEHGIETVISPIFSDDLLDRGDRYIVQALEGMALLANDEEILSFYKEHEVHVLFYGDYKKRLPSTAQGAAVVKSFDDLTISTSSNTEHRLCFGVFGNDAAESVAQFSISWNETHGKPPTRREIIEGYYGEYVDKADMFIGFGRFSTFDFPLLSSGKTSLYFTVAPSYYMTETTLRRILYDHIYLRHFRPKPDYSAMSADQLNVLRNRYRAQPDRVFGVGCVHDGIWFAEG.

The protein belongs to the diterpene synthase family. Homodimer. Mg(2+) serves as cofactor.

It catalyses the reaction tuberculosinyl diphosphate + adenosine + H(+) = 1-tuberculosinyladenosine + diphosphate. It carries out the reaction tuberculosinyl diphosphate + H2O = tuberculosinol + diphosphate. The catalysed reaction is tuberculosinyl diphosphate + H2O = (13R)-edaxadiene + diphosphate. The enzyme catalyses tuberculosinyl diphosphate + H2O = (13S)-edaxadiene + diphosphate. In terms of biological role, tuberculosinyl transferase that catalyzes the condensation of adenosine and tuberculosinyl diphosphate (TbPP) to generate 1-tuberculosinyladenosine (1-TbAd), which acts as an antiacid that directly protects M.tuberculosis from acid pH and physically remodels M.tuberculosis phagolysosomes. In addition, acts as a phosphatase that catalyzes the diphosphate-removal from TbPP to produce both tuberculosinol (TOH) and isotuberculosinol (iso-TOH). The polypeptide is Tuberculosinyl adenosine transferase (Mycobacterium tuberculosis (strain CDC 1551 / Oshkosh)).